The primary structure comprises 349 residues: Peroxidase 22 (349 aa).

Positions 1–29 (MGFSPSFSCSAIGALILGCLLLQASNSNA) are cleaved as a signal peptide. Glutamine 30 carries the post-translational modification Pyrrolidone carboxylic acid. Cystine bridges form between cysteine 40/cysteine 120, cysteine 73/cysteine 78, cysteine 126/cysteine 329, and cysteine 206/cysteine 238. Histidine 71 acts as the Proton acceptor in catalysis. The Ca(2+) site is built by aspartate 72, valine 75, glycine 77, aspartate 79, and serine 81. Asparagine 86 carries an N-linked (GlcNAc...) asparagine glycan. Residue proline 168 coordinates substrate. 2 N-linked (GlcNAc...) asparagine glycosylation sites follow: asparagine 173 and asparagine 187. Residue histidine 199 coordinates heme b. Ca(2+) is bound at residue threonine 200. Asparagine 217 and asparagine 243 each carry an N-linked (GlcNAc...) asparagine glycan. Ca(2+) contacts are provided by aspartate 251, threonine 254, and aspartate 259.

It belongs to the peroxidase family. Classical plant (class III) peroxidase subfamily. The cofactor is heme b. Ca(2+) serves as cofactor. In terms of tissue distribution, mainly expressed in roots.

It is found in the secreted. Its subcellular location is the vacuole. The enzyme catalyses 2 a phenolic donor + H2O2 = 2 a phenolic radical donor + 2 H2O. Its function is as follows. Removal of H(2)O(2), oxidation of toxic reductants, biosynthesis and degradation of lignin, suberization, auxin catabolism, response to environmental stresses such as wounding, pathogen attack and oxidative stress. These functions might be dependent on each isozyme/isoform in each plant tissue. This chain is Peroxidase 22 (PER22), found in Arabidopsis thaliana (Mouse-ear cress).